An 89-amino-acid polypeptide reads, in one-letter code: Large ribosomal subunit protein bL28 (89 aa).

Belongs to the bacterial ribosomal protein bL28 family.

The protein is Large ribosomal subunit protein bL28 of Chlamydia trachomatis serovar L2 (strain ATCC VR-902B / DSM 19102 / 434/Bu).